Consider the following 835-residue polypeptide: MSMSVNEKGICYLPDLGSSFTEDAPRPPVPGEEGDLVSSDGRQYNHSFYSSKSDSLKNEASIATPRRPDLDLGYEPEGSASPTPPYLKWAESLHSLLDDQDGIHLFRTFLKQEECADMLDFWFACSGFRKQEANDGNEKMLKLAKAIYKKYILDNNGIVSRQIKPATKSFIKDCVTKLHIDPAMFDQAQTEIQTMMEENTYPLFLKSDIYLEYTRTGGESPKLFSDQSSVSGNGKVLPGYLPTVIEDVEWRCDQEEEQIAESDPTPSNRLTQKLPLETVPQRVANSKRYQDNREYRHASWREPVNPYYVNSGYALAPATSANDSEQQSMSSDADTLSLTDSSVDGVPPYRYRKPHRREIHESAKVNGRVPLPHIPRTNRIPKDIHVEPEKFAAELISRLEGVLREREAQEKLEERLKRVRLEEEGDDADISTGPSLANHRVPPAVHVQHYGGRYSEMSYNGLQLRDAHEENPESILDEHVQRVMKTPGCQSPGTGRHSPKSRSPDGLPAGKIPGLMMPLSGGQGKHQARQGPKGEAAHLHHHKHIHHTHYAAAGKPKEQAEAEAARMHGGFAWNTEQHHYGPKSRNYADGMSVGPNTMDPMGYSSKGSTLSKRPVRKGEDGRNFEMREPLPADDMERNQKILQWMMEGEKEAGRYKRGPYGSISGPKKAQGHEPARPSSVERLGAVHPWVTAQLRNNVQPSHPFIQDPTMPPNPAPNPLTQLEEARRRLEEERRKSGTLQAKQRHKNMKKQPCENITVAYYFRGEPIPYRTSVKGRIVTLGQFKELLTKKGSYKYYFKKVSYEFDCGVVFEEVREDDAILPIFEEKIIGKVEKVD.

The segment at 16 to 60 (LGSSFTEDAPRPPVPGEEGDLVSSDGRQYNHSFYSSKSDSLKNEA) is disordered. A compositionally biased stretch (polar residues) spans 40–53 (DGRQYNHSFYSSKS). The RGS domain occupies 92-214 (SLHSLLDDQD…LKSDIYLEYT (123 aa)). Residues 318 to 349 (ATSANDSEQQSMSSDADTLSLTDSSVDGVPPY) form a disordered region. A compositionally biased stretch (low complexity) spans 328-344 (SMSSDADTLSLTDSSVD). Residues 351–436 (YRKPHRREIH…DADISTGPSL (86 aa)) are interaction with GSK3B. An interaction with beta-catenin region spans residues 437–512 (ANHRVPPAVH…SPDGLPAGKI (76 aa)). 2 disordered regions span residues 485-530 (KTPG…QARQ) and 602-627 (GYSS…FEMR). Basic and acidic residues predominate over residues 616–627 (RKGEDGRNFEMR). Positions 753–835 (CENITVAYYF…KIIGKVEKVD (83 aa)) constitute a DIX domain.

As to quaternary structure, homodimer. Interacts with dixdc1. Interacts with hwa; leading to promote the tankyrase-mediated degradation of axin1. ADP-ribosylated by tankyrase tnks and tnks2. Poly-ADP-ribosylated protein is recognized by rnf146, followed by ubiquitination at 'Lys-48' and subsequent activation of the Wnt signaling pathway. Post-translationally, ubiquitinated by rnf146 when poly-ADP-ribosylated, leading to its degradation and subsequent activation of the Wnt signaling pathway.

It is found in the cytoplasm. The protein localises to the nucleus. Its subcellular location is the membrane. The protein resides in the cell membrane. In terms of biological role, component of the beta-catenin destruction complex required for regulating ctnnb1 levels through phosphorylation and ubiquitination, and modulating Wnt-signaling. Controls dorsoventral patterning via two opposing effects: down-regulates ctnnb1 to inhibit the Wnt signaling pathway and ventralize embryos, but also dorsalizes embryos by activating a Wnt-independent JNK signaling pathway. The protein is Axin-1 (axin1) of Danio rerio (Zebrafish).